Reading from the N-terminus, the 227-residue chain is PKHD-type hydroxylase Reut_B4660 (227 aa).

The Fe2OG dioxygenase domain occupies 78 to 178; that stretch reads KVFPPLFNRY…RVSSFFWIQS (101 aa). Fe cation is bound by residues H96, D98, and H159. R169 is a 2-oxoglutarate binding site.

Fe(2+) serves as cofactor. It depends on L-ascorbate as a cofactor.

In Cupriavidus pinatubonensis (strain JMP 134 / LMG 1197) (Cupriavidus necator (strain JMP 134)), this protein is PKHD-type hydroxylase Reut_B4660.